Consider the following 153-residue polypeptide: Mitotic-spindle organizing protein 2 (153 aa).

The interval Lys-80–Asn-153 is disordered. 2 stretches are compositionally biased toward polar residues: residues Val-81–Pro-99 and Lys-107–Arg-133. Residues Gly-134–Asn-153 show a composition bias toward low complexity.

It belongs to the MOZART2 family. Part of the gamma-tubulin complex. Interacts with TUBG1.

It is found in the cytoplasm. Its subcellular location is the cytoskeleton. The protein localises to the microtubule organizing center. It localises to the centrosome. The protein resides in the spindle. This chain is Mitotic-spindle organizing protein 2 (mzt2), found in Danio rerio (Zebrafish).